Reading from the N-terminus, the 1259-residue chain is Cingulin (1259 aa).

The tract at residues 9-324 (MADQPIPVGQ…EKFPSLQAQP (316 aa)) is head. Positions 41–55 (QDSYGVAVRVQGIDG) match the ZIM motif. Over residues 69–79 (SSYDYDRHYSE) the composition is skewed to basic and acidic residues. Disordered stretches follow at residues 69–151 (SSYD…IDTK), 169–232 (VRGR…RQSL), 317–338 (FPSLQAQPGEDTRSLGSQKKEL), 941–969 (KSRREIGEAQKQAKEKTAEAERHQFNSSR), and 1192–1259 (REME…TSSC). Polar residues predominate over residues 80–100 (RSSTLDTAYSQSSRESAWSRG). Residues 117–127 (SATSQQSTSAS) show a composition bias toward low complexity. A compositionally biased stretch (polar residues) spans 128-145 (NKTNKNGLSTSSFSNQSS). Over residues 179–204 (ALKDERKRSQSLDGRKNYQDTADSRE) the composition is skewed to basic and acidic residues. Over residues 220-229 (VSSANRSFAR) the composition is skewed to polar residues. The stretch at 325–1218 (GEDTRSLGSQ…KTMEKESKRK (894 aa)) forms a coiled coil. The segment covering 326 to 338 (EDTRSLGSQKKEL) has biased composition (basic and acidic residues). A tail region spans residues 1220-1259 (IRPAHNDDDDLSSDGEYGGSYDPSSITSLLTESNLQTSSC). Residues 1241 to 1259 (DPSSITSLLTESNLQTSSC) show a composition bias toward polar residues.

Belongs to the cingulin family. As to quaternary structure, parallel homodimer. Interacts with TJP1/ZO1 and TJP2/ZO2.

The protein resides in the cell junction. Its subcellular location is the tight junction. Its function is as follows. Probably plays a role in the formation and regulation of the tight junction (TJ) paracellular permeability barrier, possibly by linking ZO proteins to the actomyosin cytoskeleton. The polypeptide is Cingulin (Xenopus tropicalis (Western clawed frog)).